Reading from the N-terminus, the 317-residue chain is Protoheme IX farnesyltransferase (317 aa).

Helical transmembrane passes span 39-59 (VLYL…GGIN), 60-80 (PILG…AGAI), 109-129 (GALA…WLAT), 131-151 (LLAA…YTMW), 160-180 (IVIG…AATG), 184-204 (LLPV…FWAL), 249-269 (VLHL…LAFV), and 297-317 (FKFS…DHLV).

The protein belongs to the UbiA prenyltransferase family. Protoheme IX farnesyltransferase subfamily.

The protein localises to the cell inner membrane. The catalysed reaction is heme b + (2E,6E)-farnesyl diphosphate + H2O = Fe(II)-heme o + diphosphate. Its pathway is porphyrin-containing compound metabolism; heme O biosynthesis; heme O from protoheme: step 1/1. In terms of biological role, converts heme B (protoheme IX) to heme O by substitution of the vinyl group on carbon 2 of heme B porphyrin ring with a hydroxyethyl farnesyl side group. In Acidiphilium cryptum (strain JF-5), this protein is Protoheme IX farnesyltransferase.